We begin with the raw amino-acid sequence, 797 residues long: LPS-assembly protein LptD (797 aa).

The N-terminal stretch at 1-20 (MHTIRCLILSALSVAGAAQA) is a signal peptide. The segment at 23-45 (SQDAAPAGRQPVGSVASPGLEMP) is disordered.

This sequence belongs to the LptD family. In terms of assembly, component of the lipopolysaccharide transport and assembly complex. Interacts with LptE and LptA.

It is found in the cell outer membrane. Its function is as follows. Together with LptE, is involved in the assembly of lipopolysaccharide (LPS) at the surface of the outer membrane. In Bordetella avium (strain 197N), this protein is LPS-assembly protein LptD.